The following is a 397-amino-acid chain: Histidinol-phosphate aminotransferase (397 aa).

Lys-247 is modified (N6-(pyridoxal phosphate)lysine).

It belongs to the class-II pyridoxal-phosphate-dependent aminotransferase family. Histidinol-phosphate aminotransferase subfamily. Homodimer. The cofactor is pyridoxal 5'-phosphate.

It catalyses the reaction L-histidinol phosphate + 2-oxoglutarate = 3-(imidazol-4-yl)-2-oxopropyl phosphate + L-glutamate. It functions in the pathway amino-acid biosynthesis; L-histidine biosynthesis; L-histidine from 5-phospho-alpha-D-ribose 1-diphosphate: step 7/9. This is Histidinol-phosphate aminotransferase from Frankia casuarinae (strain DSM 45818 / CECT 9043 / HFP020203 / CcI3).